Reading from the N-terminus, the 227-residue chain is Adapter protein MecA 1 (227 aa).

The protein belongs to the MecA family. Homodimer.

Functionally, enables the recognition and targeting of unfolded and aggregated proteins to the ClpC protease or to other proteins involved in proteolysis. Acts negatively in the development of competence by binding ComK and recruiting it to the ClpCP protease. When overexpressed, inhibits sporulation. Also involved in Spx degradation by ClpC. The chain is Adapter protein MecA 1 (mecA1) from Bacillus anthracis.